The sequence spans 249 residues: Formylaminopyrimidine import ATP-binding protein ThiZ (249 aa).

The ABC transporter domain maps to 6–228; the sequence is LTFEEVSFAY…RRKMETTEKM (223 aa). 39–46 contributes to the ATP binding site; the sequence is AKSGSGKS.

This sequence belongs to the ABC transporter superfamily. The complex is likely composed of an ATP-binding protein (ThiZ), a transmembrane protein (ThiX) and a solute-binding protein (ThiY).

Its subcellular location is the cell membrane. It functions in the pathway cofactor biosynthesis; thiamine diphosphate biosynthesis. Functionally, participates in a thiamine pyrimidine salvage pathway as part of the ABC transporter complex ThiXYZ involved in the import of thiamine degradation products such as the formylaminopyrimidine N-formyl-4-amino-5-aminomethyl-2-methylpyrimidine (FAMP). Is likely responsible for energy coupling to the transport system. The polypeptide is Formylaminopyrimidine import ATP-binding protein ThiZ (Halalkalibacterium halodurans (strain ATCC BAA-125 / DSM 18197 / FERM 7344 / JCM 9153 / C-125) (Bacillus halodurans)).